The primary structure comprises 229 residues: Acidic leucine-rich nuclear phosphoprotein 32-related protein 1 (229 aa).

LRR repeat units lie at residues 19 to 40, 42 to 63, 64 to 85, and 90 to 110; these read TVDTLFLDNAEDGQIGGLTDQL, NLEMLSMVKCGLTTLAGFPTLP, ALTYLDISDNQLGDNASFDVLV, and DLKKITLASNKLSLDNLRCLK. Positions 124–164 constitute an LRRCT domain; it reads PSLGLLEDYREKMFEMIPSLKILDGCDVDGEEVEEEFAGEG. Residues 155–177 are compositionally biased toward acidic residues; sequence EVEEEFAGEGGEDSEEGSGDEDG. Residues 155–229 are disordered; it reads EVEEEFAGEG…DNKKAAGDDE (75 aa). Basic and acidic residues predominate over residues 219–229; the sequence is PDNKKAAGDDE.

The protein belongs to the ANP32 family.

This chain is Acidic leucine-rich nuclear phosphoprotein 32-related protein 1, found in Caenorhabditis elegans.